Here is a 95-residue protein sequence, read N- to C-terminus: Protein TusB (95 aa).

Belongs to the DsrH/TusB family. As to quaternary structure, heterohexamer, formed by a dimer of trimers. The hexameric TusBCD complex contains 2 copies each of TusB, TusC and TusD. The TusBCD complex interacts with TusE.

The protein localises to the cytoplasm. Part of a sulfur-relay system required for 2-thiolation of 5-methylaminomethyl-2-thiouridine (mnm(5)s(2)U) at tRNA wobble positions. The chain is Protein TusB from Shigella flexneri.